We begin with the raw amino-acid sequence, 421 residues long: Serine hydroxymethyltransferase (421 aa).

Residues leucine 118 and glycine 122 to leucine 124 each bind (6S)-5,6,7,8-tetrahydrofolate. The residue at position 226 (lysine 226) is an N6-(pyridoxal phosphate)lysine.

It belongs to the SHMT family. In terms of assembly, homodimer. Requires pyridoxal 5'-phosphate as cofactor.

The protein resides in the cytoplasm. It carries out the reaction (6R)-5,10-methylene-5,6,7,8-tetrahydrofolate + glycine + H2O = (6S)-5,6,7,8-tetrahydrofolate + L-serine. Its pathway is one-carbon metabolism; tetrahydrofolate interconversion. It participates in amino-acid biosynthesis; glycine biosynthesis; glycine from L-serine: step 1/1. Functionally, catalyzes the reversible interconversion of serine and glycine with tetrahydrofolate (THF) serving as the one-carbon carrier. This reaction serves as the major source of one-carbon groups required for the biosynthesis of purines, thymidylate, methionine, and other important biomolecules. Also exhibits THF-independent aldolase activity toward beta-hydroxyamino acids, producing glycine and aldehydes, via a retro-aldol mechanism. The chain is Serine hydroxymethyltransferase from Mycoplasmopsis agalactiae (strain NCTC 10123 / CIP 59.7 / PG2) (Mycoplasma agalactiae).